A 100-amino-acid polypeptide reads, in one-letter code: Small ribosomal subunit protein uS14c (100 aa).

It belongs to the universal ribosomal protein uS14 family. Part of the 30S ribosomal subunit.

It localises to the plastid. Its subcellular location is the chloroplast. Functionally, binds 16S rRNA, required for the assembly of 30S particles. This Citrus sinensis (Sweet orange) protein is Small ribosomal subunit protein uS14c.